Reading from the N-terminus, the 100-residue chain is Small ribosomal subunit protein uS14c (100 aa).

Belongs to the universal ribosomal protein uS14 family. Part of the 30S ribosomal subunit.

Its subcellular location is the plastid. It is found in the chloroplast. Functionally, binds 16S rRNA, required for the assembly of 30S particles. The protein is Small ribosomal subunit protein uS14c of Crucihimalaya wallichii (Rock-cress).